Consider the following 205-residue polypeptide: Protein TK0174 (205 aa).

The AMMECR1 domain maps to 7–201 (EWGEFLVRLA…EEYPRGPVRR (195 aa)).

The chain is Protein TK0174 from Thermococcus kodakarensis (strain ATCC BAA-918 / JCM 12380 / KOD1) (Pyrococcus kodakaraensis (strain KOD1)).